Reading from the N-terminus, the 635-residue chain is Rab11 family-interacting protein 4 (635 aa).

In terms of domain architecture, EF-hand spans G49–C84. Ca(2+) is bound by residues D62, N64, R68, and D73. A necessary for interaction with RAB11A, subcellular location, homo- or heterooligomerization region spans residues K82 to H635. 2 disordered regions span residues G147–P176 and E216–R258. The span at E216 to D225 shows a compositional bias: acidic residues. A coiled-coil region spans residues K279–Y615. Residues E572–K634 form the FIP-RBD domain.

In terms of assembly, homodimer. Forms a complex with Rab11 (RAB11A or RAB11B) and ARF6. Interacts with RAB11A; the interaction is direct. Forms a heterooligomeric complex with RAB11FIP2, RAB11FIP3 and RAB11FIP5. Interacts with ECPAS. As to expression, strongly expressed in the developing retina. Expressed predominantly in neural tissues.

The protein resides in the recycling endosome membrane. It localises to the cleavage furrow. The protein localises to the midbody. It is found in the cytoplasmic vesicle. Acts as a regulator of endocytic traffic by participating in membrane delivery. Required for the abscission step in cytokinesis, possibly by acting as an 'address tag' delivering recycling endosome membranes to the cleavage furrow during late cytokinesis. May play a role in differentiation during retinal development, in a Rab11-independent manner. This Mus musculus (Mouse) protein is Rab11 family-interacting protein 4 (Rab11fip4).